The sequence spans 486 residues: MKSLDDLDFDNRFARLGGAFSTEVLPDPIAEPRLVVASPAALALLDLPAETSDEALFAELFGGHKLWSEAEPRAMVYSGHQFGSYNPRLGDGRGLLLGEVINQAGEHWDLHLKGAGQTPYSRMGDGRAVLRSSIREFLASEALPALGIPSSRALCVIGSSTPVWREKKESAATLLRLAPSHVRFGHFEYFYYTRQHDQLKQLAAFVLEHHFADCNAAERPYAAMFRQVVERNAELIARWQAYGFCHGVMNTDNMSILGITFDYGPYAFLDDFDANHICNHSDDAGRYSFSNQVPIAHWNLAALAQALTPLVEVDELRASLDLFLPLYQAHYLDLMRRRLGLGVAAENDQALVQELLQRMQGSAVDYSLFFRRLGEETPERALASLRDDFVDREAFDRWAEAYRRRVEEEGGDQESRRRRMHAVNPLYVLRNYLAQQAIEAAEQGDYTEVRLLHQVLSRPFEEQPGMERFTRRPPDWGRHLEISCSS.

ATP is bound by residues Gly90, Gly92, Arg93, Lys113, Asp125, Gly126, Arg176, and Arg183. Asp252 acts as the Proton acceptor in catalysis. Mg(2+) contacts are provided by Asn253 and Asp262. ATP is bound at residue Asp262.

The protein belongs to the SELO family. It depends on Mg(2+) as a cofactor. Mn(2+) is required as a cofactor.

The catalysed reaction is L-seryl-[protein] + ATP = 3-O-(5'-adenylyl)-L-seryl-[protein] + diphosphate. It catalyses the reaction L-threonyl-[protein] + ATP = 3-O-(5'-adenylyl)-L-threonyl-[protein] + diphosphate. The enzyme catalyses L-tyrosyl-[protein] + ATP = O-(5'-adenylyl)-L-tyrosyl-[protein] + diphosphate. It carries out the reaction L-histidyl-[protein] + UTP = N(tele)-(5'-uridylyl)-L-histidyl-[protein] + diphosphate. The catalysed reaction is L-seryl-[protein] + UTP = O-(5'-uridylyl)-L-seryl-[protein] + diphosphate. It catalyses the reaction L-tyrosyl-[protein] + UTP = O-(5'-uridylyl)-L-tyrosyl-[protein] + diphosphate. Functionally, nucleotidyltransferase involved in the post-translational modification of proteins. It can catalyze the addition of adenosine monophosphate (AMP) or uridine monophosphate (UMP) to a protein, resulting in modifications known as AMPylation and UMPylation. This chain is Protein nucleotidyltransferase YdiU, found in Pseudomonas aeruginosa (strain LESB58).